The primary structure comprises 345 residues: Phosphoribosylformylglycinamidine cyclo-ligase (345 aa).

The protein belongs to the AIR synthase family.

It is found in the cytoplasm. The enzyme catalyses 2-formamido-N(1)-(5-O-phospho-beta-D-ribosyl)acetamidine + ATP = 5-amino-1-(5-phospho-beta-D-ribosyl)imidazole + ADP + phosphate + H(+). It participates in purine metabolism; IMP biosynthesis via de novo pathway; 5-amino-1-(5-phospho-D-ribosyl)imidazole from N(2)-formyl-N(1)-(5-phospho-D-ribosyl)glycinamide: step 2/2. This chain is Phosphoribosylformylglycinamidine cyclo-ligase, found in Aeromonas salmonicida (strain A449).